We begin with the raw amino-acid sequence, 335 residues long: Tetraacyldisaccharide 4'-kinase (335 aa).

58 to 65 provides a ligand contact to ATP; that stretch reads TVGGSGKT.

This sequence belongs to the LpxK family.

The enzyme catalyses a lipid A disaccharide + ATP = a lipid IVA + ADP + H(+). The protein operates within glycolipid biosynthesis; lipid IV(A) biosynthesis; lipid IV(A) from (3R)-3-hydroxytetradecanoyl-[acyl-carrier-protein] and UDP-N-acetyl-alpha-D-glucosamine: step 6/6. Its function is as follows. Transfers the gamma-phosphate of ATP to the 4'-position of a tetraacyldisaccharide 1-phosphate intermediate (termed DS-1-P) to form tetraacyldisaccharide 1,4'-bis-phosphate (lipid IVA). The chain is Tetraacyldisaccharide 4'-kinase from Shewanella oneidensis (strain ATCC 700550 / JCM 31522 / CIP 106686 / LMG 19005 / NCIMB 14063 / MR-1).